Here is a 382-residue protein sequence, read N- to C-terminus: 3-hydroxyisobutyryl-CoA hydrolase, mitochondrial (382 aa).

Residues Glu117, Gly142, Glu165, and Asp173 each contribute to the substrate site.

It belongs to the enoyl-CoA hydratase/isomerase family.

The protein resides in the mitochondrion. It carries out the reaction 3-hydroxy-2-methylpropanoyl-CoA + H2O = 3-hydroxy-2-methylpropanoate + CoA + H(+). Its pathway is amino-acid degradation; L-valine degradation. In terms of biological role, hydrolyzes 3-hydroxyisobutyryl-CoA (HIBYL-CoA), a saline catabolite. Has high activity toward isobutyryl-CoA. Could be an isobutyryl-CoA dehydrogenase that functions in valine catabolism. Also hydrolyzes 3-hydroxypropanoyl-CoA. The protein is 3-hydroxyisobutyryl-CoA hydrolase, mitochondrial (hibch) of Danio rerio (Zebrafish).